The primary structure comprises 524 residues: Hydroxysteroid dehydrogenase-like protein 2 (524 aa).

NADP(+)-binding positions include 17-23 (GASRGIG), lysine 42, and aspartate 74. Lysine 42 carries the post-translational modification N6-(2-hydroxyisobutyryl)lysine. Lysine 116 is subject to N6-acetyllysine. Tyrosine 168 acts as the Proton acceptor in catalysis. Position 172 (lysine 172) interacts with NADP(+). Basic and acidic residues predominate over residues 283-300 (EEKESYDPVPEVKEEKLQ). Residues 283 to 410 (EEKESYDPVP…PLLQSVLPPK (128 aa)) form a disordered region. Residues 301 to 391 (LQEQPQLQEQ…QQQPQQRPQQ (91 aa)) show a composition bias toward low complexity. The region spanning 414-521 (GAVEETFRIV…KLEKLMTHMN (108 aa)) is the SCP2 domain. Lysine 424 carries the N6-succinyllysine modification.

This sequence belongs to the short-chain dehydrogenases/reductases (SDR) family.

Its subcellular location is the peroxisome. The protein localises to the mitochondrion. In terms of biological role, has apparently no steroid dehydrogenase activity. Controls bile acid (BA) and lipid metabolism in response to nutritional cues. This is Hydroxysteroid dehydrogenase-like protein 2 (Hsdl2) from Rattus norvegicus (Rat).